The primary structure comprises 251 residues: Ubiquinone/menaquinone biosynthesis C-methyltransferase UbiE (251 aa).

S-adenosyl-L-methionine is bound by residues threonine 74, aspartate 95, asparagine 123–alanine 124, and serine 140.

It belongs to the class I-like SAM-binding methyltransferase superfamily. MenG/UbiE family.

The catalysed reaction is a 2-demethylmenaquinol + S-adenosyl-L-methionine = a menaquinol + S-adenosyl-L-homocysteine + H(+). It carries out the reaction a 2-methoxy-6-(all-trans-polyprenyl)benzene-1,4-diol + S-adenosyl-L-methionine = a 5-methoxy-2-methyl-3-(all-trans-polyprenyl)benzene-1,4-diol + S-adenosyl-L-homocysteine + H(+). It functions in the pathway quinol/quinone metabolism; menaquinone biosynthesis; menaquinol from 1,4-dihydroxy-2-naphthoate: step 2/2. The protein operates within cofactor biosynthesis; ubiquinone biosynthesis. Functionally, methyltransferase required for the conversion of demethylmenaquinol (DMKH2) to menaquinol (MKH2) and the conversion of 2-polyprenyl-6-methoxy-1,4-benzoquinol (DDMQH2) to 2-polyprenyl-3-methyl-6-methoxy-1,4-benzoquinol (DMQH2). The chain is Ubiquinone/menaquinone biosynthesis C-methyltransferase UbiE from Klebsiella pneumoniae (strain 342).